The primary structure comprises 399 residues: Phosphoglycerate kinase (399 aa).

Substrate is bound by residues 22 to 24, Arg38, 61 to 64, Arg120, and Arg153; these read DFN and HLGR. ATP contacts are provided by residues Lys204, Glu326, and 352-355; that span reads GGDT.

The protein belongs to the phosphoglycerate kinase family. Monomer.

It localises to the cytoplasm. It catalyses the reaction (2R)-3-phosphoglycerate + ATP = (2R)-3-phospho-glyceroyl phosphate + ADP. It functions in the pathway carbohydrate degradation; glycolysis; pyruvate from D-glyceraldehyde 3-phosphate: step 2/5. The polypeptide is Phosphoglycerate kinase (Citrifermentans bemidjiense (strain ATCC BAA-1014 / DSM 16622 / JCM 12645 / Bem) (Geobacter bemidjiensis)).